The sequence spans 284 residues: ATP synthase gamma chain (284 aa).

It belongs to the ATPase gamma chain family. In terms of assembly, F-type ATPases have 2 components, CF(1) - the catalytic core - and CF(0) - the membrane proton channel. CF(1) has five subunits: alpha(3), beta(3), gamma(1), delta(1), epsilon(1). CF(0) has three main subunits: a, b and c.

Its subcellular location is the cell membrane. Its function is as follows. Produces ATP from ADP in the presence of a proton gradient across the membrane. The gamma chain is believed to be important in regulating ATPase activity and the flow of protons through the CF(0) complex. This is ATP synthase gamma chain from Pelotomaculum thermopropionicum (strain DSM 13744 / JCM 10971 / SI).